A 109-amino-acid chain; its full sequence is Immunity protein CdiI (109 aa).

As to quaternary structure, specifically interacts with cognate toxin CdiA, which inhibits the toxin.

Functionally, immunity protein component of a toxin-immunity protein module, which functions as a cellular contact-dependent growth inhibition (CDI) system. CDI modules allow bacteria to communicate with and inhibit the growth of closely related neighboring bacteria in a contact-dependent fashion. Neutralizes the toxic activity of cognate toxin CdiA (C-terminal 160 residue CT fragment) upon expression in E.coli. Does not inhibit toxic activity of CdiA from other strains of B.pseudomallei. The polypeptide is Immunity protein CdiI (cdiI) (Burkholderia pseudomallei (Pseudomonas pseudomallei)).